Here is a 635-residue protein sequence, read N- to C-terminus: Glutamyl-tRNA(Gln) amidotransferase subunit E (635 aa).

The disordered stretch occupies residues L415–D437.

The protein belongs to the GatB/GatE family. GatE subfamily. In terms of assembly, heterodimer of GatD and GatE.

It carries out the reaction L-glutamyl-tRNA(Gln) + L-glutamine + ATP + H2O = L-glutaminyl-tRNA(Gln) + L-glutamate + ADP + phosphate + H(+). Allows the formation of correctly charged Gln-tRNA(Gln) through the transamidation of misacylated Glu-tRNA(Gln) in organisms which lack glutaminyl-tRNA synthetase. The reaction takes place in the presence of glutamine and ATP through an activated gamma-phospho-Glu-tRNA(Gln). The GatDE system is specific for glutamate and does not act on aspartate. This is Glutamyl-tRNA(Gln) amidotransferase subunit E from Pyrococcus horikoshii (strain ATCC 700860 / DSM 12428 / JCM 9974 / NBRC 100139 / OT-3).